The chain runs to 116 residues: Iron-sulfur cluster insertion protein ErpA (116 aa).

The iron-sulfur cluster site is built by cysteine 44, cysteine 108, and cysteine 110.

It belongs to the HesB/IscA family. As to quaternary structure, homodimer. Iron-sulfur cluster serves as cofactor.

Its function is as follows. Required for insertion of 4Fe-4S clusters for at least IspG. This Shewanella piezotolerans (strain WP3 / JCM 13877) protein is Iron-sulfur cluster insertion protein ErpA.